Here is a 148-residue protein sequence, read N- to C-terminus: UPF0260 protein ESA_01462 (148 aa).

Belongs to the UPF0260 family.

This is UPF0260 protein ESA_01462 from Cronobacter sakazakii (strain ATCC BAA-894) (Enterobacter sakazakii).